The chain runs to 369 residues: MRDRVTAARRVVVKIGSSSLTTATGGLDDGRVDALVDTLGGLAAQGREVVLVSSGAIAAGLAPLGLTRRPRDLATQQAAASVGQGLLIGRYAAAFARHHLTVGQVLLTVDDMTRRAHYRNAYRTLRKLLDLRAVPIVNENDTVATEEIRFGDNDRLAALVAALVDTDLLVLLSDVDALWTGDPTRPGSTPIAEVHDARDLSGVAIGGAGRSGVGTGGMVTKVEAARIATGFGIPVVLTSADLAAEALDGKPVGTLFHPSPRRPAARLFWLAHATSPRGRLHLDPGAVEAVVDRRKSLLAAGISAVQGAFTAGDPVDLVDTEGVPVARGLVNYDAVELPGLLGRSTSELATALGPAYEREVVHCDDLVLL.

An ATP-binding site is contributed by Lys-14. Substrate contacts are provided by Ser-54, Asp-141, and Asn-153. Residues Ser-173–Asp-174 and Thr-215–Lys-221 each bind ATP. One can recognise a PUA domain in the interval Arg-277–Ala-355.

The protein belongs to the glutamate 5-kinase family.

Its subcellular location is the cytoplasm. It catalyses the reaction L-glutamate + ATP = L-glutamyl 5-phosphate + ADP. It participates in amino-acid biosynthesis; L-proline biosynthesis; L-glutamate 5-semialdehyde from L-glutamate: step 1/2. Functionally, catalyzes the transfer of a phosphate group to glutamate to form L-glutamate 5-phosphate. This chain is Glutamate 5-kinase, found in Salinispora arenicola (strain CNS-205).